The primary structure comprises 299 residues: GTP cyclohydrolase FolE2 (299 aa).

A disordered region spans residues 1–25 (MKTKQWPSKTERHKRFGSVPPVAGK).

It belongs to the GTP cyclohydrolase IV family.

It carries out the reaction GTP + H2O = 7,8-dihydroneopterin 3'-triphosphate + formate + H(+). It functions in the pathway cofactor biosynthesis; 7,8-dihydroneopterin triphosphate biosynthesis; 7,8-dihydroneopterin triphosphate from GTP: step 1/1. Converts GTP to 7,8-dihydroneopterin triphosphate. This is GTP cyclohydrolase FolE2 from Halalkalibacterium halodurans (strain ATCC BAA-125 / DSM 18197 / FERM 7344 / JCM 9153 / C-125) (Bacillus halodurans).